The chain runs to 229 residues: MVQGVQLPVCLICGLYSQDIQKHRQGFPSSLKLSNGYILPEGKMTPNTLFVGGIDMKVDENEIREFFAKYGSVKEVKIITYRGGICKGYGFVYFSEDVDIQTIVDQPISFKGKKLKLGPAIMKERSSRSVSSPMIGPSQWVNPTPYMYCSCCPPGLAPPSPVFSGGNQYMQPYSYSSPPGIMVPQVPMNYAQTTYAYQYPLPQWCGEQRTRLVNQNFVDCGVQTLLTLM.

In terms of domain architecture, RRM spans 47 to 128; it reads NTLFVGGIDM…PAIMKERSSR (82 aa). In terms of domain architecture, DAZ spans 172–198; sequence PYSYSSPPGIMVPQVPMNYAQTTYAYQ.

The protein belongs to the RRM DAZ family. Testis and ovary specific. In ovary, it is localized in the cortex of oocytes. At the onset of embryogenesis, maternal product is located at the vegetal pole, before migrating toward blastomeres through cytoplasmic streams as early embryogenesis proceededs.

Its subcellular location is the cytoplasm. Functionally, RNA-binding protein involved in gametogenesis in both males and females. Acts by binding to the 3'-UTR of mRNA, specifically recognizing GUU triplets, and promoting the translation of key transcripts. Establishes oocyte polarity through interaction with Bucky ball (BUC). Interacts with Bucky ball (BUC) mRNA to mediate Balbiani body formation and oocyte polarity during early oogenesis. This chain is Deleted in azoospermia-like (dazl), found in Danio rerio (Zebrafish).